Here is an 89-residue protein sequence, read N- to C-terminus: Probable monothiol glutaredoxin GrlA (89 aa).

The Glutaredoxin domain occupies 1-89 (MLYMKGTPKM…EPMLRDAVAA (89 aa)). Lys-5 contacts glutathione. Position 13 (Cys-13) interacts with [2Fe-2S] cluster. Residues Arg-42, Phe-54, and 67-68 (SD) each bind glutathione.

It belongs to the glutaredoxin family. Monothiol subfamily.

The protein is Probable monothiol glutaredoxin GrlA (grlA) of Legionella pneumophila subsp. pneumophila (strain Philadelphia 1 / ATCC 33152 / DSM 7513).